The following is a 345-amino-acid chain: Calcium uniporter regulatory subunit MCUb, mitochondrial (345 aa).

The transit peptide at 1–44 (MPGALSGRRMLPSGLCLGRWQLLRTIRARGRGDPRELPSTPQVL) directs the protein to the mitochondrion. Positions 188 to 221 (EIQKRRERHLMAKIDHLQEQLRPLEQVKAAIEAR) form a coiled coil. A run of 2 helical transmembrane segments spans residues 229 to 249 (LLWAGLALLSVQGGALAWLTW) and 259 to 279 (PVTFFLSFANSIVFFAYFIIT). A coiled-coil region spans residues 306-334 (FDVEQYNKLKEDLAEATESLESVRRSLRL).

Belongs to the MCU (TC 1.A.77) family. In terms of assembly, homooligomer. Associates with the uniplex complex, composed of MCU, MICU1, MICU2 and EMRE/SMDT1, inhibiting its activity. As to expression, detected in lung, brain and heart, and at lower levels in white fat, skeletal muscle and spleen. Detected at very low levels in kidney and liver. Highly expressed in macrophages during the progression of skeletal muscle regeneration.

The protein resides in the mitochondrion inner membrane. In terms of biological role, negative regulator of the mitochondrial calcium uniporter (MCU), a channel that mediates calcium uptake into the mitochondrial matrix. MCUB is required to limit mitochondrial calcium overload during stress. Acts as a dominant-negative regulator that displaces MCU from the functional uniplex complex and thereby decreases the association of calcium sensors MICU1 and MICU2, preventing channel gating. Mitochondrial calcium homeostasis plays key roles in mitochondrial metabolism. Acts as an important regulator of mitochondrial metabolism in response to stress in muscle cells: induced in response to fasting, leading to restrict mitochondrial calcium uptake, resulting in reprogramming of mitochondria toward fatty acid oxidation preference. Acts as a regulator of macrophage polarization during skeletal muscle regeneration: inhibition of mitochondrial calcium uptake drives differentiation of macrophages with anti-inflammatory profile, promoting the differentiation and fusion of satellite cells. The protein is Calcium uniporter regulatory subunit MCUb, mitochondrial of Mus musculus (Mouse).